The sequence spans 1145 residues: DNA-directed RNA polymerase subunit beta (1145 aa).

The segment covering 1101 to 1112 (LPEERRVSSSKE) has biased composition (basic and acidic residues). The segment at 1101–1145 (LPEERRVSSSKEEIEEEEEVEDNSDEFDETFLEEAEDDFSLDDED) is disordered. Positions 1113–1145 (EIEEEEEVEDNSDEFDETFLEEAEDDFSLDDED) are enriched in acidic residues.

It belongs to the RNA polymerase beta chain family. The RNAP catalytic core consists of 2 alpha, 1 beta, 1 beta' and 1 omega subunit. When a sigma factor is associated with the core the holoenzyme is formed, which can initiate transcription.

The catalysed reaction is RNA(n) + a ribonucleoside 5'-triphosphate = RNA(n+1) + diphosphate. DNA-dependent RNA polymerase catalyzes the transcription of DNA into RNA using the four ribonucleoside triphosphates as substrates. In Desulforamulus reducens (strain ATCC BAA-1160 / DSM 100696 / MI-1) (Desulfotomaculum reducens), this protein is DNA-directed RNA polymerase subunit beta.